We begin with the raw amino-acid sequence, 479 residues long: Acetylcholine receptor subunit alpha-type acr-15 (479 aa).

Positions 1-18 (MLLPILLHFLLLITQLNG) are cleaved as a signal peptide. Topologically, residues 19-230 (SPAEVRLIND…HLRRRTLYYS (212 aa)) are extracellular. 2 N-linked (GlcNAc...) asparagine glycosylation sites follow: asparagine 60 and asparagine 92. An intrachain disulfide couples cysteine 146 to cysteine 160. N-linked (GlcNAc...) asparagine glycosylation is present at asparagine 200. Cysteine 208 and cysteine 209 are joined by a disulfide. A helical membrane pass occupies residues 231–251 (FNLIAPVLLTMILVILGFTVS). Residues 252–257 (PETCEK) lie on the Cytoplasmic side of the membrane. A helical transmembrane segment spans residues 258–278 (VGLQISVSLAICIFLTIMSEL). The Extracellular portion of the chain corresponds to 279-285 (TPQTSEA). The chain crosses the membrane as a helical span at residues 286–306 (VPLLGVFFHTCNFISVLATSF). Topologically, residues 307-453 (TVYVQSFHFR…WRFAAIVVDR (147 aa)) are cytoplasmic. Residues 454–474 (LCLLAFSLLIVVVSIIIALRA) form a helical membrane-spanning segment. The Extracellular segment spans residues 475–479 (PYLFA).

This sequence belongs to the ligand-gated ion channel (TC 1.A.9) family. Acetylcholine receptor (TC 1.A.9.1) subfamily. Expressed in interneurons, motor neurons, pharyngeal neurons and muscles.

It localises to the cell membrane. The protein resides in the postsynaptic cell membrane. After binding acetylcholine, the AChR responds by an extensive change in conformation that affects all subunits and leads to opening of an ion-conducting channel across the plasma membrane. Activity is required in glutamatergic neurons to mediate nicotine-induced and nicotine-motivated behaviors. The chain is Acetylcholine receptor subunit alpha-type acr-15 from Caenorhabditis elegans.